Reading from the N-terminus, the 960-residue chain is Chromosome transmission fidelity protein 18 (960 aa).

Disordered regions lie at residues 56-79 and 91-113; these read DLFHSSQPVGSPTRNGDDIPSTLD and DISEDETINQRHAPQTDYRYPNT. Polar residues predominate over residues 58–69; sequence FHSSQPVGSPTR. ATP is bound at residue 423–430; sequence GLAGAGKT.

It belongs to the activator 1 small subunits family. CTF18 subfamily. Component of the ctf18-RFC complex which consists of ctf18, ctf8, dcc1, rfc2, rfc3, rfc4 and rfc5.

It is found in the nucleus. In terms of biological role, essential for the fidelity of chromosome transmission. Required for the DNA replication block checkpoint. Replication factor C (RFC) complex has an essential but redundant activity in sister chromatid cohesion establishment. Acts as a PCNA loader, loading PCNA onto primed templates. An RFC-like complex (ctf18-RFC) is formed where ctf18 replaces rfc1 in the RFC complex along with the association of dcc1 and ctf8. This complex is required for efficient establishment of chromosome cohesion during S-phase. This is Chromosome transmission fidelity protein 18 (ctf18) from Schizosaccharomyces pombe (strain 972 / ATCC 24843) (Fission yeast).